The following is a 131-amino-acid chain: Neo-calmodulin (131 aa).

EF-hand domains follow at residues 1-32 (EFKEAFSLFDKDGDGTITTKELGTVMRSLGQN), 33-68 (PTEAELQDMINEVDADGNGTIDFPEFLTMMARKMKD), 70-105 (DSEEEIREAFRVFDKDSNGYISAAELRHVMTNLGEK), and 106-131 (LTDEEVDEMIREADIDGDGQVNYEEF). Ca(2+) contacts are provided by Asp10, Asp12, Asp14, Thr16, Glu21, Asp46, Asp48, Asn50, Thr52, Glu57, Asp83, Asp85, Asn87, Tyr89, Glu94, Asp119, Asp121, Asp123, Gln125, and Glu130.

It belongs to the calmodulin family.

This Gallus gallus (Chicken) protein is Neo-calmodulin.